A 534-amino-acid polypeptide reads, in one-letter code: Fimbrial subunit type 2 (534 aa).

The N-terminal stretch at 1–32 (MKYNTSTLGRRAAAAAGVLTLAVLGLAPMAQA) is a signal peptide. Disordered regions lie at residues 56–76 (GDGN…GKGA) and 329–376 (TYAE…DKDG). Over residues 334 to 347 (PPAPETPPANPDNP) the composition is skewed to pro residues. Residues 361 to 376 (TIKKVDGNDRSGDKDG) show a composition bias toward basic and acidic residues. Residues 492 to 496 (LPLTG) carry the LPXTG sorting signal motif. Residue Thr495 is modified to Pentaglycyl murein peptidoglycan amidated threonine. A propeptide spans 496–534 (GANGMLILTASGAALLMIAVGSVLVARYRERKRNRDLAA) (removed by sortase).

It is found in the secreted. The protein resides in the cell wall. The protein localises to the fimbrium. Its function is as follows. Major fimbrial subunit of A.naeslundii. The protein is Fimbrial subunit type 2 of Actinomyces naeslundii.